Reading from the N-terminus, the 268-residue chain is Proenkephalin-A (268 aa).

The signal sequence occupies residues 1–24; it reads MARFLRLCTWLLALGSCLLATVQA. 3 disulfides stabilise this stretch: Cys-26/Cys-48, Cys-30/Cys-52, and Cys-33/Cys-65. The tract at residues 163–184 is disordered; the sequence is TGDNRAKDSHQQESTNNDEDMS. 2 consecutive propeptides follow at residues 197-208 and 218-228; these read SPQLEDEAKELQ and VGRPEWWMDYQ. Ser-252 carries the post-translational modification Phosphoserine.

Belongs to the opioid neuropeptide precursor family. Post-translationally, proenkephalin-A is cleaved by CTSL to generate Met-enkephalin. In terms of processing, processed and degraded by ACE. Probably cleaved by ACE. Post-translationally, processed by ACE to generate Met-enkephalin in the nucleus accumbens of the brain. In terms of processing, the N-terminal domain contains 6 conserved cysteines thought to be involved in disulfide bonding and/or processing. Spermatogenic and somatic cells.

Its subcellular location is the cytoplasmic vesicle. The protein resides in the secretory vesicle. The protein localises to the chromaffin granule lumen. It localises to the secreted. Its function is as follows. Neuropeptide that competes with and mimic the effects of opiate drugs. They play a role in a number of physiologic functions, including pain perception and responses to stress. Functionally, met-enkephalin-Arg-Phe neuropeptide acts as a strong ligand of Mu-type opioid receptor OPRM1. Met-enkephalin-Arg-Phe-binding to OPRM1 in the nucleus accumbens of the brain increases activation of OPRM1, leading to long-term synaptic depression of glutamate release. Increases glutamate release in the striatum and decreases GABA concentration in the striatum. In terms of biological role, increases glutamate release in the striatum. This is Proenkephalin-A (Penk) from Mus musculus (Mouse).